The following is a 40-amino-acid chain: Omega-conotoxin RsXXVIA (40 aa).

Contains 4 disulfide bonds. Expressed by the venom duct.

The protein localises to the secreted. Omega-conotoxins act at presynaptic membranes, they bind and block voltage-gated calcium channels (Cav). This toxin inhibits rat Cav2.2/CACNA1B calcium channels in a dose-dependent manner (EC(50)=2.8 uM), whose effect is partially reversed after washing. In vivo, when injected into mice, it shows both an analgesic effect in acute thermal pain at 30 and 45 minutes post-injection and an anti-nociceptive effect in a formalin chronic pain test. The protein is Omega-conotoxin RsXXVIA of Conus regularis (Regular cone).